Here is a 140-residue protein sequence, read N- to C-terminus: MKRPGDGRQESPSSTARPDNRNTGSRGEEIATSFLGQQGYRILERNFRCKGGELDIVARAPGERSLVFVEVKTRRDRSYGPPQLAVTPFKQRQISKAALTWLSRNHLHDSQARFDVIAILLEDGGRHSIEHIVNAFELAY.

Residues 1-27 are disordered; the sequence is MKRPGDGRQESPSSTARPDNRNTGSRG. Residues 10–25 show a composition bias toward polar residues; that stretch reads ESPSSTARPDNRNTGS.

It belongs to the UPF0102 family.

The protein is UPF0102 protein Ppro_1186 of Pelobacter propionicus (strain DSM 2379 / NBRC 103807 / OttBd1).